The sequence spans 281 residues: MIMKLAEKFEELKNKGEKAFVAFYVGGDPNLEISEKALEVICKHADIVEIGIPFSDPVADGITIQKADVRALNSGMNPLKAFELAKKLNEKAPNVPKVFLTYYNIIFKMGEEEFVKKCKEAGVSGIIVPDLPIEEADSLYNYCKKYGVDLIFLVAPTTPDERLKKILEKCSGFVYVVSVTGITGAREKVAEETKELIKRVKKFSKIPACVGFGISKREHVEEITEIADGAIVGSAIVKIVEKHLDENGQIKDEEKFLKELEEFVKNLKEGTKKKAKVAIKN.

Residues glutamate 49 and aspartate 60 each act as proton acceptor in the active site.

Belongs to the TrpA family. As to quaternary structure, tetramer of two alpha and two beta chains.

It catalyses the reaction (1S,2R)-1-C-(indol-3-yl)glycerol 3-phosphate + L-serine = D-glyceraldehyde 3-phosphate + L-tryptophan + H2O. The protein operates within amino-acid biosynthesis; L-tryptophan biosynthesis; L-tryptophan from chorismate: step 5/5. The alpha subunit is responsible for the aldol cleavage of indoleglycerol phosphate to indole and glyceraldehyde 3-phosphate. This is Tryptophan synthase alpha chain from Methanocaldococcus jannaschii (strain ATCC 43067 / DSM 2661 / JAL-1 / JCM 10045 / NBRC 100440) (Methanococcus jannaschii).